The following is a 233-amino-acid chain: MADS-box transcription factor 56 (233 aa).

Positions 1–61 constitute an MADS-box domain; the sequence is MVRGRTELKR…GRLYEFASAP (61 aa). Residues 87–177 enclose the K-box domain; it reads IQQVKDDTLG…RGKHRNLEAA (91 aa).

It localises to the nucleus. In terms of biological role, probable transcription factor. The protein is MADS-box transcription factor 56 (MADS56) of Oryza sativa subsp. indica (Rice).